The sequence spans 90 residues: Protein S100-A6 (90 aa).

2 consecutive EF-hand domains span residues 12 to 47 and 48 to 83; these read LVAIFHKYSGQEGDKNTLSKSELKELIQKELTIGAK and LQDAEIAKLMDDLDRNKDQVVNFQEYVTFLGALAMI. Residues threonine 28 and glutamate 33 each coordinate Ca(2+). Lysine 40 bears the N6-acetyllysine mark. Residue lysine 47 is modified to N6-acetyllysine; alternate. Position 47 is an N6-succinyllysine; alternate (lysine 47). Ca(2+)-binding residues include aspartate 61, asparagine 63, aspartate 65, and glutamate 72.

This sequence belongs to the S-100 family. As to quaternary structure, homodimer; head to tail assembly of 2 subunits. Interacts with CACYBP in a calcium-dependent manner. Interacts with ANXA2 and ANXA11 (via N-terminus). Interacts with SUGT1. Interacts with TP53; has higher affinity for TP53 that is phosphorylated on its N-terminal domain, and lower affinity for TP53 that is phosphorylated on its C-terminal domain. Interacts with tropomyosin. Interacts with FKBP4. Interacts with PPP5C (via TPR repeats); the interaction is calcium-dependent and modulates PPP5C activity. Interacts with TPPP; this interaction inhibits TPPP dimerization.

It is found in the nucleus envelope. The protein resides in the cytoplasm. It localises to the cell membrane. In terms of biological role, may function as calcium sensor and modulator, contributing to cellular calcium signaling. May function by interacting with other proteins, such as TPR-containing proteins, and indirectly play a role in many physiological processes such as the reorganization of the actin cytoskeleton and in cell motility. Binds 2 calcium ions. Calcium binding is cooperative. This chain is Protein S100-A6 (S100A6), found in Sus scrofa (Pig).